A 663-amino-acid polypeptide reads, in one-letter code: Chaperone protein HtpG (663 aa).

The a; substrate-binding stretch occupies residues 1 to 352; it reads MTKQTLSFQA…SADLPLNVSR (352 aa). Residues 218–228 show a composition bias toward basic and acidic residues; that stretch reads ELINPSDEKGG. A disordered region spans residues 218–237; it reads ELINPSDEKGGRQPGGMVKT. The segment at 353–595 is b; it reads ELLQESRDVK…DHGMSTQLAR (243 aa). The c stretch occupies residues 596–663; the sequence is MLKQAGQAAP…YVKRVNALLV (68 aa).

This sequence belongs to the heat shock protein 90 family. As to quaternary structure, homodimer.

Its subcellular location is the cytoplasm. Molecular chaperone. Has ATPase activity. This Albidiferax ferrireducens (strain ATCC BAA-621 / DSM 15236 / T118) (Rhodoferax ferrireducens) protein is Chaperone protein HtpG.